Reading from the N-terminus, the 160-residue chain is Transcription elongation factor GreA (160 aa).

Residues 10–37 (TLDGKAKLENELQELKTVKRKEVVERIK) are a coiled coil.

The protein belongs to the GreA/GreB family.

Its function is as follows. Necessary for efficient RNA polymerase transcription elongation past template-encoded arresting sites. The arresting sites in DNA have the property of trapping a certain fraction of elongating RNA polymerases that pass through, resulting in locked ternary complexes. Cleavage of the nascent transcript by cleavage factors such as GreA or GreB allows the resumption of elongation from the new 3'terminus. GreA releases sequences of 2 to 3 nucleotides. The sequence is that of Transcription elongation factor GreA from Listeria innocua serovar 6a (strain ATCC BAA-680 / CLIP 11262).